We begin with the raw amino-acid sequence, 360 residues long: Peptide chain release factor 1 (360 aa).

N5-methylglutamine is present on glutamine 235. Residues 291 to 308 (ASERRNLLGTGDRSDRNR) are compositionally biased toward basic and acidic residues. The disordered stretch occupies residues 291 to 312 (ASERRNLLGTGDRSDRNRTYNF).

It belongs to the prokaryotic/mitochondrial release factor family. Post-translationally, methylated by PrmC. Methylation increases the termination efficiency of RF1.

It is found in the cytoplasm. Its function is as follows. Peptide chain release factor 1 directs the termination of translation in response to the peptide chain termination codons UAG and UAA. In Yersinia pseudotuberculosis serotype I (strain IP32953), this protein is Peptide chain release factor 1.